The primary structure comprises 416 residues: Notoamide biosynthesis cluster protein N' (416 aa).

The signal sequence occupies residues 1–16 (MRAALLTLAFTALAAA). N119 and N262 each carry an N-linked (GlcNAc...) asparagine glycan.

Its function is as follows. Part of the gene cluster that mediates the biosynthesis of notoamide, a fungal indole alkaloid that belongs to a family of natural products containing a characteristic bicyclo[2.2.2]diazaoctane core. The first step of notoamide biosynthesis involves coupling of L-proline and L-tryptophan by the bimodular NRPS notE', to produce cyclo-L-tryptophan-L-proline called brevianamide F. The reverse prenyltransferase notF' then acts as a deoxybrevianamide E synthase and converts brevianamide F to deoxybrevianamide E via reverse prenylation at C-2 of the indole ring leading to the bicyclo[2.2.2]diazaoctane core. Deoxybrevianamide E is further hydroxylated at C-6 of the indole ring, likely catalyzed by the cytochrome P450 monooxygenase notG', to yield 6-hydroxy-deoxybrevianamide E. 6-hydroxy-deoxybrevianamide E is a specific substrate of the prenyltransferase notC' for normal prenylation at C-7 to produce 6-hydroxy-7-prenyl-deoxybrevianamide, also called notoamide S. As the proposed pivotal branching point in notoamide biosynthesis, notoamide S can be diverted to notoamide E through an oxidative pyran ring closure putatively catalyzed by either notH' cytochrome P450 monooxygenase or the notD' FAD-linked oxidoreductase. This step would be followed by an indole 2,3-epoxidation-initiated pinacol-like rearrangement catalyzed by the notB' FAD-dependent monooxygenase leading to the formation of notoamide C and notoamide D. On the other hand notoamide S is converted to notoamide T by notH' (or notD'), a bifunctional oxidase that also functions as the intramolecular Diels-Alderase responsible for generation of (-)-notoamide T. To generate antipodal (+)-notoaminide T, notH (or notD) in Aspergillus strain MF297-2 is expected to catalyze a Diels-Alder reaction leading to the opposite stereochemistry. The remaining oxidoreductase notD' (or notH') likely catalyzes the oxidative pyran ring formation to yield (-)-stephacidin A. The FAD-dependent monooxygenase notI' is highly similar to notB' and is predicted to catalyze a similar conversion from (-)-stephacidin A to (+)-notoamide B via the 2,3-epoxidation of (-)-stephacidin A followed by a pinacol-type rearrangement. Finally, it remains unclear which enzyme could be responsible for the final hydroxylation steps leading to notoamide A and sclerotiamide. The function of notN' in the notoamide biosynthesis has not been determined yet. This chain is Notoamide biosynthesis cluster protein N', found in Aspergillus versicolor.